The primary structure comprises 264 residues: 5'-nucleotidase SurE (264 aa).

D8, D9, S41, and N98 together coordinate a divalent metal cation.

Belongs to the SurE nucleotidase family. The cofactor is a divalent metal cation.

It is found in the cytoplasm. It carries out the reaction a ribonucleoside 5'-phosphate + H2O = a ribonucleoside + phosphate. Nucleotidase that shows phosphatase activity on nucleoside 5'-monophosphates. This Carboxydothermus hydrogenoformans (strain ATCC BAA-161 / DSM 6008 / Z-2901) protein is 5'-nucleotidase SurE.